The sequence spans 510 residues: GPI mannosyltransferase 4 (510 aa).

The next 3 membrane-spanning stretches (helical) occupy residues 7–27, 62–82, and 89–109; these read LILALSLLLRLHLAISPSYIH, FVPLWILYTAPLSVLNFLWKG, and AYWFIRAGHALAYWILGDMAL. N-linked (GlcNAc...) asparagine glycosylation occurs at asparagine 142. A helical transmembrane segment spans residues 179–199; it reads LGLLIVIGTWNRVTFPLWLIV. A glycan (N-linked (GlcNAc...) asparagine) is linked at asparagine 212. The next 3 helical transmembrane spans lie at 213-233, 268-288, and 339-359; these read ISSLILLIASVALTAFFVIHV, LTHLVSNLPVLLGPLLILLRT, and FTSAIFLLSYVFNIIMGFLMG.

It belongs to the glycosyltransferase 22 family. PIGZ subfamily.

The protein localises to the endoplasmic reticulum membrane. It functions in the pathway glycolipid biosynthesis; glycosylphosphatidylinositol-anchor biosynthesis. Its function is as follows. Alpha-1,2-mannosyltransferase involved in glycosylphosphatidylinositol-anchor biosynthesis. Transfers a fourth mannose to trimannosyl-GPIs during GPI precursor assembly. The presence of a fourth mannose in GPI is essential in fungi. The sequence is that of GPI mannosyltransferase 4 (SMP3) from Yarrowia lipolytica (strain CLIB 122 / E 150) (Yeast).